The chain runs to 362 residues: Glutamate 5-kinase (362 aa).

Position 3 (Lys-3) interacts with ATP. Substrate contacts are provided by Ser-43, Asp-128, and Asn-140. ATP-binding positions include 160-161 (TD) and 202-208 (TGGMRTK). The region spanning 267–348 (AGAILVDAGA…REIENVLGYS (82 aa)) is the PUA domain.

The protein belongs to the glutamate 5-kinase family.

The protein localises to the cytoplasm. It catalyses the reaction L-glutamate + ATP = L-glutamyl 5-phosphate + ADP. It participates in amino-acid biosynthesis; L-proline biosynthesis; L-glutamate 5-semialdehyde from L-glutamate: step 1/2. In terms of biological role, catalyzes the transfer of a phosphate group to glutamate to form L-glutamate 5-phosphate. The sequence is that of Glutamate 5-kinase from Xanthomonas oryzae pv. oryzae (strain KACC10331 / KXO85).